The primary structure comprises 627 residues: WPP domain-interacting tail-anchored protein 2 (627 aa).

3 coiled-coil regions span residues 81 to 152, 188 to 218, and 312 to 542; these read CGIL…RRTL, LEKS…KLHY, and TLRE…KILR. A disordered region spans residues 577–597; it reads SLQEDERTREEPEKQSVSEKS. Residues 580-597 are compositionally biased toward basic and acidic residues; the sequence is EDERTREEPEKQSVSEKS. A helical membrane pass occupies residues 606–626; the sequence is LKHILVVALVFVLFCSFFGVT.

As to quaternary structure, component of Ran complexes at least composed of WIT1 or WIT2, RANGAP1 or RANGAP2, and WIP1 or WIP2 or WIP3. Interacts with KAKU1. Core component of the LINC complex which is composed of inner nuclear membrane SUN domain-containing proteins coupled to outer nuclear membrane WIP and WIT proteins. The LINC complex also involves nucleoskeletal proteins CRWN/LINC and possibly KAKU4 and the cytoskeletal myosin KAKU1. Interacts with WIP1, WIP2 and WIP3. As to expression, ubiquitous.

It is found in the membrane. Functionally, together with WIT1, required for the nuclear envelope docking of RANGAP proteins in root tips. Plays a role in nuclear shape determination. As component of the SUN-WIP-WIT2-KAKU1 complex, mediates the transfer of cytoplasmic forces to the nuclear envelope (NE), leading to nuclear shape changes. The protein is WPP domain-interacting tail-anchored protein 2 (WIT2) of Arabidopsis thaliana (Mouse-ear cress).